A 56-amino-acid polypeptide reads, in one-letter code: Large ribosomal subunit protein bL32 (56 aa).

The interval 1–27 is disordered; the sequence is MAVQQNKKSRSRRDMRRSHDALTTAAV. Residues 7–16 are compositionally biased toward basic residues; that stretch reads KKSRSRRDMR.

Belongs to the bacterial ribosomal protein bL32 family.

This is Large ribosomal subunit protein bL32 from Actinobacillus pleuropneumoniae serotype 7 (strain AP76).